Here is a 231-residue protein sequence, read N- to C-terminus: Flagellar L-ring protein (231 aa).

The first 18 residues, 1–18, serve as a signal peptide directing secretion; that stretch reads MSRLLIVVSLSSAFALAG. The N-palmitoyl cysteine moiety is linked to residue Cys-19. Cys-19 carries the S-diacylglycerol cysteine lipid modification.

It belongs to the FlgH family. The basal body constitutes a major portion of the flagellar organelle and consists of four rings (L,P,S, and M) mounted on a central rod.

The protein localises to the cell outer membrane. It is found in the bacterial flagellum basal body. In terms of biological role, assembles around the rod to form the L-ring and probably protects the motor/basal body from shearing forces during rotation. The protein is Flagellar L-ring protein of Stutzerimonas stutzeri (strain A1501) (Pseudomonas stutzeri).